The sequence spans 466 residues: MKQSILSFIQKHQLLKEGAKIIVGVSGGSDSMALLHFLKNLQEQWEIEVIALTINHQLRGEDSTADQKFVEQWCFHSDIRCIAHQVDVGEYQRQYRVSEELAARRLRYEIYEAEMRKQGADYLALGHHGDDQVETLFMRLTRVATSNAFEGIPVKRSFASGQLIRPFLCVNKQLILNYVKENEVPFREDQTNKDNKYTRNYYRNEIIPLLTKNNERLFITAQRLSETLREDENYLAKEANRMVEEVIIWDENFSKISFSNQAFIERPHALQRRAYHLILNYLYDTLPKDLSYIHEEKFFALIERQEGNTYIDFPLSLRVENSYGKIQLYFPNRHPRHSVFHLPLQVPDQVELPDGARITSEWIDATLDKNSRNNIIIPIDSVALPLHIRTRKPGDRMTWDGLKGTKKLKDIWIDAKIPTNERDTWPIVTDDNNTIIWLVGLKKAFGSNQFCQSGEKIKLSYHKGNI.

26 to 31 (SGGSDS) provides a ligand contact to ATP.

The protein belongs to the tRNA(Ile)-lysidine synthase family.

The protein localises to the cytoplasm. The catalysed reaction is cytidine(34) in tRNA(Ile2) + L-lysine + ATP = lysidine(34) in tRNA(Ile2) + AMP + diphosphate + H(+). Ligates lysine onto the cytidine present at position 34 of the AUA codon-specific tRNA(Ile) that contains the anticodon CAU, in an ATP-dependent manner. Cytidine is converted to lysidine, thus changing the amino acid specificity of the tRNA from methionine to isoleucine. The protein is tRNA(Ile)-lysidine synthase of Oceanobacillus iheyensis (strain DSM 14371 / CIP 107618 / JCM 11309 / KCTC 3954 / HTE831).